A 511-amino-acid polypeptide reads, in one-letter code: Zinc finger CCCH-type with G patch domain-containing protein (511 aa).

The C3H1-type zinc-finger motif lies at 157–180 (PCSYYLEGECRFDEARCRYSHGAL). Residues 254–281 (DQEDELTSEDSSSVNDGSSDEEESDMDD) form a disordered region. A compositionally biased stretch (acidic residues) spans 271–281 (SSDEEESDMDD). The G-patch domain occupies 311-357 (TRGIGSKLMEKMGYIHGTGLGSDGRGIVTPVSAQILPKGRSLDACME). Disordered regions lie at residues 409-433 (GSDNKQQAEPEAKKAKANDLQQHST) and 478-511 (MHNQKQELATLQAQERSLSKEQQTRKSKNKMFEF). A compositionally biased stretch (basic and acidic residues) spans 414 to 425 (QQAEPEAKKAKA). Positions 478-493 (MHNQKQELATLQAQER) are enriched in polar residues. A compositionally biased stretch (basic and acidic residues) spans 494 to 511 (SLSKEQQTRKSKNKMFEF).

Its subcellular location is the nucleus. Transcription repressor. This chain is Zinc finger CCCH-type with G patch domain-containing protein, found in Drosophila ananassae (Fruit fly).